The sequence spans 248 residues: Probable transcriptional regulatory protein FTN_1028 (248 aa).

Belongs to the TACO1 family.

It is found in the cytoplasm. This Francisella tularensis subsp. novicida (strain U112) protein is Probable transcriptional regulatory protein FTN_1028.